Reading from the N-terminus, the 434-residue chain is Enolase (434 aa).

Position 166 (Gln166) interacts with (2R)-2-phosphoglycerate. The active-site Proton donor is the Glu208. 3 residues coordinate Mg(2+): Asp245, Glu290, and Asp317. (2R)-2-phosphoglycerate is bound by residues Lys342, Arg371, Ser372, and Lys393. Lys342 functions as the Proton acceptor in the catalytic mechanism.

Belongs to the enolase family. Requires Mg(2+) as cofactor.

It localises to the cytoplasm. Its subcellular location is the secreted. The protein resides in the cell surface. The catalysed reaction is (2R)-2-phosphoglycerate = phosphoenolpyruvate + H2O. The protein operates within carbohydrate degradation; glycolysis; pyruvate from D-glyceraldehyde 3-phosphate: step 4/5. Catalyzes the reversible conversion of 2-phosphoglycerate (2-PG) into phosphoenolpyruvate (PEP). It is essential for the degradation of carbohydrates via glycolysis. The sequence is that of Enolase from Caldicellulosiruptor saccharolyticus (strain ATCC 43494 / DSM 8903 / Tp8T 6331).